Consider the following 702-residue polypeptide: Polyribonucleotide nucleotidyltransferase (702 aa).

2 residues coordinate Mg(2+): D485 and D491. One can recognise a KH domain in the interval P552–I612. The S1 motif domain maps to G622 to K690.

It belongs to the polyribonucleotide nucleotidyltransferase family. Requires Mg(2+) as cofactor.

Its subcellular location is the cytoplasm. It carries out the reaction RNA(n+1) + phosphate = RNA(n) + a ribonucleoside 5'-diphosphate. Functionally, involved in mRNA degradation. Catalyzes the phosphorolysis of single-stranded polyribonucleotides processively in the 3'- to 5'-direction. The sequence is that of Polyribonucleotide nucleotidyltransferase from Clostridium botulinum (strain Kyoto / Type A2).